Reading from the N-terminus, the 633-residue chain is Phosphomethylpyrimidine synthase (633 aa).

Residues Asn245, Met274, Tyr303, His339, Ser359–Gly361, Asp400–Arg403, and Glu439 each bind substrate. A Zn(2+)-binding site is contributed by His443. Tyr466 serves as a coordination point for substrate. His507 is a Zn(2+) binding site. Cys587, Cys590, and Cys595 together coordinate [4Fe-4S] cluster.

Belongs to the ThiC family. In terms of assembly, homodimer. It depends on [4Fe-4S] cluster as a cofactor.

The enzyme catalyses 5-amino-1-(5-phospho-beta-D-ribosyl)imidazole + S-adenosyl-L-methionine = 4-amino-2-methyl-5-(phosphooxymethyl)pyrimidine + CO + 5'-deoxyadenosine + formate + L-methionine + 3 H(+). Its pathway is cofactor biosynthesis; thiamine diphosphate biosynthesis. In terms of biological role, catalyzes the synthesis of the hydroxymethylpyrimidine phosphate (HMP-P) moiety of thiamine from aminoimidazole ribotide (AIR) in a radical S-adenosyl-L-methionine (SAM)-dependent reaction. This chain is Phosphomethylpyrimidine synthase, found in Neisseria meningitidis serogroup B (strain ATCC BAA-335 / MC58).